The sequence spans 839 residues: NT-3 growth factor receptor (839 aa).

The first 31 residues, 1–31 (MDVSLCPAKCSFWRIFLLGSVWLDYVGSVLA), serve as a signal peptide directing secretion. Disulfide bonds link Cys32–Cys38 and Cys36–Cys45. Topologically, residues 32–429 (CPANCVCSKT…TVTHKPEEDT (398 aa)) are extracellular. N-linked (GlcNAc...) asparagine glycans are attached at residues Asn72 and Asn79. LRR repeat units follow at residues 104–125 (GLQK…AFAK) and 128–149 (HLRY…LFQT). N-linked (GlcNAc...) asparagine glycans are attached at residues Asn133 and Asn163. The region spanning 160–209 (NFFNCSCDIRWMQLWQEQGEAKLNSQNLYCINADGSQLPLFRMNISQCDL) is the LRRCT domain. Intrachain disulfides connect Cys164-Cys189 and Cys166-Cys207. N-linked (GlcNAc...) asparagine glycans are attached at residues Asn203, Asn218, Asn232, Asn259, Asn267, Asn272, and Asn294. 2 consecutive Ig-like C2-type domains span residues 210-300 (PEIS…VALT) and 309-382 (SLEE…IAKN). Cys231 and Cys284 are joined by a disulfide. A disulfide bridge links Cys320 with Cys362. N-linked (GlcNAc...) asparagine glycosylation is found at Asn375 and Asn388. The chain crosses the membrane as a helical span at residues 430-453 (FGVSIAVGLAAFACVLLVVLFVMI). The Cytoplasmic portion of the chain corresponds to 454-839 (NKYGRRSKFG…ATPIYLDILG (386 aa)). At Ser493 the chain carries Phosphoserine. Tyr516 is modified (phosphotyrosine; by autocatalysis). A Protein kinase domain is found at 538 to 839 (IVLKRELGEG…ATPIYLDILG (302 aa)). ATP is bound by residues 544 to 552 (LGEGAFGKV) and Lys572. Asp679 serves as the catalytic Proton acceptor. Tyr705, Tyr709, and Tyr710 each carry phosphotyrosine; by autocatalysis.

The protein belongs to the protein kinase superfamily. Tyr protein kinase family. Insulin receptor subfamily. As to quaternary structure, exists in a dynamic equilibrium between monomeric (low affinity) and dimeric (high affinity) structures. Binds SH2B2. Interacts with SQSTM1 and KIDINS220. Interacts with PTPRS. Interacts with MAPK8IP3/JIP3. In terms of processing, ligand-mediated auto-phosphorylation. Widely expressed but mainly in nervous tissue. Isoform 2 is expressed at higher levels in adult brain than in fetal brain.

The protein localises to the membrane. The catalysed reaction is L-tyrosyl-[protein] + ATP = O-phospho-L-tyrosyl-[protein] + ADP + H(+). Receptor tyrosine kinase involved in nervous system and probably heart development. Upon binding of its ligand NTF3/neurotrophin-3, NTRK3 autophosphorylates and activates different signaling pathways, including the phosphatidylinositol 3-kinase/AKT and the MAPK pathways, that control cell survival and differentiation. The polypeptide is NT-3 growth factor receptor (NTRK3) (Homo sapiens (Human)).